The primary structure comprises 379 residues: V-type proton ATPase subunit S1 (379 aa).

A signal peptide spans 1-17; sequence MLWKSLIALCVIGAAVA. Residues 18 to 333 are Lumenal-facing; it reads EQTPVFLWGA…WDCVGFVTPG (316 aa). Residues Asn225 and Asn284 are each glycosylated (N-linked (GlcNAc...) asparagine). Cys282 and Cys326 are oxidised to a cystine. A helical transmembrane segment spans residues 334 to 354; sequence ILMGLFVVALLLVIMFVGVCW. Topologically, residues 355–379 are cytoplasmic; the sequence is MMDINTMDRFDDPKGKTITINAAAE.

This sequence belongs to the vacuolar ATPase subunit S1 family. As to quaternary structure, accessory component of the multisubunit proton-transporting vacuolar (V)-ATPase protein pump. May interact with ATP6AP2.

It is found in the endoplasmic reticulum membrane. Functionally, accessory subunit of the proton-transporting vacuolar (V)-ATPase protein pump, which is required for luminal acidification of secretory vesicles. The sequence is that of V-type proton ATPase subunit S1 from Drosophila melanogaster (Fruit fly).